The following is a 335-amino-acid chain: Probable cytosolic iron-sulfur protein assembly protein Ciao1 (335 aa).

WD repeat units follow at residues 12 to 51 (GHKGRIWGVAWHPKGNVFASCGEDKAIRIWSLNGNTWTTK), 57 to 96 (GHKRTIREIRWSPCGQYLASASFDGTTAIWSKSSGEFECN), 101 to 140 (GHENEVKSVSWSRSGGLLATCSRDKSVWIWEVAGDDEFEC), 146 to 185 (PHTQDVKRVVWHPTKELLASASYDNTIKMFAEDALDSDWD), 192 to 231 (SHTSTVWSIDFDATGERLVSCSDDTSLKIWQAYHPGNDAG), 250 to 289 (QHSRAIYDVSWCKLTNLIATACGDDGIRIFKETSDSKRDE), and 301 to 335 (AHDQDVNSVEWNPVVEGQLISCSDDGTIKVWKMTE).

This sequence belongs to the WD repeat CIA1 family.

In terms of biological role, essential component of the cytosolic iron-sulfur (Fe/S) protein assembly machinery. Required for the maturation of extramitochondrial Fe/S proteins. In Drosophila ananassae (Fruit fly), this protein is Probable cytosolic iron-sulfur protein assembly protein Ciao1.